The sequence spans 138 residues: MSGTLLAFDFGTKSIGVAVGQRITGTARPLPAIKAQDGTPDWNIIERLLKEWQPDEIIVGLPLNMDGTEQPLTARARKFANRIHGRFGVDVKLHDERLSTVEARSGLFEQGGYRALNKGKVDSASAVIILESYFEQGY.

The protein belongs to the YqgF nuclease family.

It localises to the cytoplasm. In terms of biological role, could be a nuclease involved in processing of the 5'-end of pre-16S rRNA. The chain is Putative pre-16S rRNA nuclease from Shigella dysenteriae serotype 1 (strain Sd197).